A 419-amino-acid chain; its full sequence is Thymidine phosphorylase (419 aa).

Belongs to the thymidine/pyrimidine-nucleoside phosphorylase family. In terms of assembly, homodimer.

The catalysed reaction is thymidine + phosphate = 2-deoxy-alpha-D-ribose 1-phosphate + thymine. Its function is as follows. The enzymes which catalyze the reversible phosphorolysis of pyrimidine nucleosides are involved in the degradation of these compounds and in their utilization as carbon and energy sources, or in the rescue of pyrimidine bases for nucleotide synthesis. This Mycoplasmoides pirum (Mycoplasma pirum) protein is Thymidine phosphorylase (deoA).